The primary structure comprises 339 residues: Probable scoulerine-9-O-methyltransferase OMT3B (339 aa).

Met161 provides a ligand contact to S-adenosyl-L-methionine. Asp164 serves as a coordination point for substrate. Residues Thr165, Gly191, Asp214, 228–229 (DV), and Lys242 contribute to the S-adenosyl-L-methionine site. 243–247 (SILHE) contacts substrate. His246 acts as the Proton acceptor in catalysis.

It belongs to the class I-like SAM-binding methyltransferase superfamily. Cation-independent O-methyltransferase family. COMT subfamily.

The enzyme catalyses (S)-scoulerine + S-adenosyl-L-methionine = (S)-tetrahydrocolumbamine + S-adenosyl-L-homocysteine + H(+). It participates in alkaloid biosynthesis. In terms of biological role, methyltransferase involved in the biosynthesis of the benzylisoquinoline alkaloid noscapine. Catalyzes the conversion of (S)-scoulerine to (S)-tetrahydrocolumbamine. The protein is Probable scoulerine-9-O-methyltransferase OMT3B of Papaver somniferum (Opium poppy).